The sequence spans 1671 residues: DENN domain-containing protein Crag (1671 aa).

The MABP domain maps to Ile-39–Met-195. One can recognise a uDENN domain in the interval Val-187 to Ile-364. The cDENN domain maps to Pro-385–Thr-521. The region spanning Leu-523–His-632 is the dDENN domain. 3 disordered regions span residues Gln-997–Ser-1160, Ala-1245–Glu-1311, and Val-1415–Asn-1435. 2 stretches are compositionally biased toward acidic residues: residues Gly-1011 to Tyr-1023 and Tyr-1050 to Asp-1061. Over residues Arg-1072 to Asp-1089 the composition is skewed to polar residues. The span at Ala-1100 to Gln-1119 shows a compositional bias: low complexity. The span at Arg-1136 to Gly-1147 shows a compositional bias: polar residues. A compositionally biased stretch (basic residues) spans Asn-1254–Gln-1277. The span at Ala-1281 to Ser-1301 shows a compositional bias: basic and acidic residues.

As to quaternary structure, interacts with Cam. Interacts with Rab10. Interacts (via the DENN domains) with Rab11. As to expression, expressed in the adult head and body.

It localises to the cytoplasm. The protein resides in the cell cortex. The protein localises to the early endosome. It is found in the recycling endosome. Its subcellular location is the cytoplasmic granule. In terms of biological role, calmodulin-binding protein that acts as a guanine exchange factor for Rab10 and Rab11. Essential for maintenance of adult photoreceptor cells. Upon light stimulation, required for trafficking of newly synthesized ninaE (Rh1) from the trans-Golgi network to rhabdomere membranes via Rab11-dependent vesicular transport. During egg development, essential for establishing and maintaining epithelial cell polarity by regulating the correct polarized deposition of basal membrane (BM) proteins in follicular epithelial (FE) cells. Functions by targeting Rab10 to the basal cytoplasm, where it restricts the secretion of BM proteins such as trol/Pcan and vkg/Coll IV to the basal surface. Appears to be involved in regulating the levels and distribution of the guanine nucleotide exchange factor strat, however the two proteins appear to have independent roles in regulating polarized BM protein secretion in the FE. The protein is DENN domain-containing protein Crag of Drosophila melanogaster (Fruit fly).